A 300-amino-acid chain; its full sequence is Transcription factor DUO1 (300 aa).

2 HTH myb-type domains span residues 8–64 and 65–116; these read KEEI…RPNL and KNGC…KRLA. 2 DNA-binding regions (H-T-H motif) span residues 36 to 60 and 89 to 112; these read WSSI…VNKL and WARI…SSRQ. The span at 123-135 shows a compositional bias: low complexity; the sequence is SDASSSSFNPKSS. Residues 123–145 are disordered; sequence SDASSSSFNPKSSSSHRLKGKNV. Residues 136 to 145 show a composition bias toward basic residues; that stretch reads SSHRLKGKNV.

Confined to inflorescences, especially in stamens and pollen.

Its subcellular location is the nucleus. In terms of biological role, transcription activator that acts as a positive regulator of male germline development by promoting both gametic cell specification and cell cycle progression. Binds to canonical MYB sites 5'-AACCGTC-3', 5'-AAACCGC-3' and 5'-AACCGT-3' in promoters to trigger the expression of male germline-specific or enriched genes (e.g. MGH3, GEX2 and GCS1), including those required for fertilization. Required for sperm cell specification leading to pollen maturation by activating a germline-specific regulon. Involved in pollen mitosis entry at G2-M transition via the regulation of CYCB1-1, DAZ1 and DAZ2 expression. In Arabidopsis thaliana (Mouse-ear cress), this protein is Transcription factor DUO1.